Consider the following 210-residue polypeptide: NADH dehydrogenase [ubiquinone] iron-sulfur protein 8, mitochondrial (210 aa).

The transit peptide at 1–34 (MRCLTMPTLLRALAQAAHTGPPGGRTLHSSAVAA) directs the protein to the mitochondrion. 2 4Fe-4S ferredoxin-type domains span residues 102-131 (RRYP…IEAE) and 141-170 (TRYD…EGPN). Residues Cys111, Cys114, Cys117, Cys121, Cys150, Cys153, Cys156, and Cys160 each contribute to the [4Fe-4S] cluster site.

Belongs to the complex I 23 kDa subunit family. In terms of assembly, core subunit of respiratory chain NADH dehydrogenase (Complex I) which is composed of 45 different subunits. This is a component of the iron-sulfur (IP) fragment of the enzyme. Interacts with RAB5IF. [4Fe-4S] cluster is required as a cofactor.

Its subcellular location is the mitochondrion inner membrane. The enzyme catalyses a ubiquinone + NADH + 5 H(+)(in) = a ubiquinol + NAD(+) + 4 H(+)(out). Core subunit of the mitochondrial membrane respiratory chain NADH dehydrogenase (Complex I) which catalyzes electron transfer from NADH through the respiratory chain, using ubiquinone as an electron acceptor. Essential for the catalytic activity and assembly of complex I. The polypeptide is NADH dehydrogenase [ubiquinone] iron-sulfur protein 8, mitochondrial (NDUFS8) (Macaca fascicularis (Crab-eating macaque)).